Here is a 453-residue protein sequence, read N- to C-terminus: Ribosomal protein uS12 methylthiotransferase RimO (453 aa).

Residues 9-124 (PKIGFVSLGC…VMDAVHKHMP (116 aa)) enclose the MTTase N-terminal domain. 6 residues coordinate [4Fe-4S] cluster: Cys-18, Cys-54, Cys-83, Cys-155, Cys-159, and Cys-162. The region spanning 141–382 (LTPKHFAYLK…MLLQEEISKK (242 aa)) is the Radical SAM core domain. Residues 385–453 (QAKVGKTMRV…ADAHDLWAEA (69 aa)) form the TRAM domain.

Belongs to the methylthiotransferase family. RimO subfamily. [4Fe-4S] cluster is required as a cofactor.

It is found in the cytoplasm. The enzyme catalyses L-aspartate(89)-[ribosomal protein uS12]-hydrogen + (sulfur carrier)-SH + AH2 + 2 S-adenosyl-L-methionine = 3-methylsulfanyl-L-aspartate(89)-[ribosomal protein uS12]-hydrogen + (sulfur carrier)-H + 5'-deoxyadenosine + L-methionine + A + S-adenosyl-L-homocysteine + 2 H(+). Functionally, catalyzes the methylthiolation of an aspartic acid residue of ribosomal protein uS12. The sequence is that of Ribosomal protein uS12 methylthiotransferase RimO from Janthinobacterium sp. (strain Marseille) (Minibacterium massiliensis).